The following is a 272-amino-acid chain: 2-amino-3,7-dideoxy-D-threo-hept-6-ulosonate synthase (272 aa).

Asp-33 serves as the catalytic Proton acceptor. 1-deoxy-D-threo-hexo-2,5-diulose 6-phosphate is bound by residues Asp-33–Ser-37 and Tyr-153–Arg-155. Tyr-153 functions as the Proton donor in the catalytic mechanism. Lys-184 serves as the catalytic Schiff-base intermediate with substrate. Residues Gly-209–Gly-210 and Gly-237–Arg-238 contribute to the 1-deoxy-D-threo-hexo-2,5-diulose 6-phosphate site.

It belongs to the DeoC/FbaB aldolase family. ADHS subfamily. As to quaternary structure, homodecamer.

The catalysed reaction is 1-deoxy-D-threo-hexo-2,5-diulose 6-phosphate + L-aspartate 4-semialdehyde = 2,3-dioxopropyl phosphate + 2-amino-2,3,7-trideoxy-D-lyxo-hept-6-ulosonate. In terms of biological role, catalyzes a transaldol reaction between 6-deoxy-5-ketofructose 1-phosphate (DKFP) and L-aspartate semialdehyde (ASA) with an elimination of hydroxypyruvaldehyde phosphate to yield 2-amino-3,7-dideoxy-D-threo-hept-6-ulosonate (ADH). Plays a key role in an alternative pathway of the biosynthesis of 3-dehydroquinate (DHQ), which is involved in the canonical pathway for the biosynthesis of aromatic amino acids. This is 2-amino-3,7-dideoxy-D-threo-hept-6-ulosonate synthase from Methanococcus maripaludis (strain C5 / ATCC BAA-1333).